Here is a 565-residue protein sequence, read N- to C-terminus: MKSPAPSRPQKMALIPACIFLCFAALSVQAEETSVTPQPPDILLGPLFNDVQNAKLFPDQKTFADAVPNSDPLMILADYRIQQNQSGFDLRHFVNVNFTLPKEGEKYVPPEGQSLREHIDGLWPVLTRSTENTEKWDSLLPLPKPYVVPGGRFREVYYWDSYFTMLGLAESGHWDKVADMVANFAHEIDNYGHIPNGNRSYYLSRSQPPFFALMVELLAQHEGDAALKQYLPQMQKEYAYWMDGVENLQAGQQEKRVVKLQDGTLLNRYWDDRDTPRPESWVEDIATAKSNPNRPATEIYRDLRSAAASGWDFSSRWMDNPQQLNTLRTTSIVPVDLNSLMFKMEKILARASKAIGDNAMANQYETLANARQKGIEKYLWNDQQGWYADYDLKSHKVRNQLTAAALFPLYVNAAAKDRASKMATATKTHLLQPGGLNTTSVKSGQQWDAPNGWAPLQWVATEGLQNYGQKEVAMDISWHFLTNVQHTYDREKKLVEKYDVSTTGTGGGGGEYPLQDGFGWTNGVTLKMLDLICPKEQPCDNVPATRPLSESTTQPLKQKEAEPTP.

Positions 1–30 are cleaved as a signal peptide; that stretch reads MKSPAPSRPQKMALIPACIFLCFAALSVQA. Residues arginine 152, 159–160, asparagine 196, 205–207, 277–279, and glycine 310 each bind substrate; these read WD, RSQ, and RPE. Catalysis depends on proton donor/acceptor residues aspartate 312 and glutamate 496. Glutamate 511 is a binding site for substrate. The tract at residues 539 to 565 is disordered; sequence CDNVPATRPLSESTTQPLKQKEAEPTP.

This sequence belongs to the glycosyl hydrolase 37 family. In terms of assembly, monomer.

It is found in the periplasm. It carries out the reaction alpha,alpha-trehalose + H2O = alpha-D-glucose + beta-D-glucose. Its function is as follows. Provides the cells with the ability to utilize trehalose at high osmolarity by splitting it into glucose molecules that can subsequently be taken up by the phosphotransferase-mediated uptake system. This is Periplasmic trehalase from Escherichia coli O1:K1 / APEC.